The primary structure comprises 328 residues: D-cysteine desulfhydrase (328 aa).

Lysine 51 bears the N6-(pyridoxal phosphate)lysine mark.

Belongs to the ACC deaminase/D-cysteine desulfhydrase family. In terms of assembly, homodimer. Requires pyridoxal 5'-phosphate as cofactor.

The catalysed reaction is D-cysteine + H2O = hydrogen sulfide + pyruvate + NH4(+) + H(+). In terms of biological role, catalyzes the alpha,beta-elimination reaction of D-cysteine and of several D-cysteine derivatives. It could be a defense mechanism against D-cysteine. The polypeptide is D-cysteine desulfhydrase (Salmonella agona (strain SL483)).